A 349-amino-acid polypeptide reads, in one-letter code: Heat-inducible transcription repressor HrcA (349 aa).

It belongs to the HrcA family.

Its function is as follows. Negative regulator of class I heat shock genes (grpE-dnaK-dnaJ and groELS operons). Prevents heat-shock induction of these operons. This Mycoplasmoides gallisepticum (strain R(low / passage 15 / clone 2)) (Mycoplasma gallisepticum) protein is Heat-inducible transcription repressor HrcA.